The following is a 279-amino-acid chain: Undecaprenyl-diphosphatase (279 aa).

A run of 8 helical transmembrane segments spans residues 2–22 (LFIE…TEWL), 44–64 (AFME…VIVI), 85–105 (WQLW…AVPL), 113–133 (FNHM…FLWI), 163–183 (VLSI…AIIL), 188–208 (TVAA…YSGL), 225–245 (LLVL…VIKL), and 255–275 (FTVF…YSVF).

It belongs to the UppP family.

Its subcellular location is the cell membrane. The enzyme catalyses di-trans,octa-cis-undecaprenyl diphosphate + H2O = di-trans,octa-cis-undecaprenyl phosphate + phosphate + H(+). Catalyzes the dephosphorylation of undecaprenyl diphosphate (UPP). Confers resistance to bacitracin. The polypeptide is Undecaprenyl-diphosphatase (Streptococcus equi subsp. zooepidemicus (strain MGCS10565)).